Here is a 523-residue protein sequence, read N- to C-terminus: UDP-glucuronosyltransferase 3A1 (523 aa).

An N-terminal signal peptide occupies residues 1-22 (MAGQQALLLFGFILPGLLFSEA). Topologically, residues 23–483 (AKILTVSLVG…HAFQQPWYEQ (461 aa)) are extracellular. Asparagine 52 is a glycosylation site (N-linked (GlcNAc...) asparagine). Residues 484–504 (YLLDVFLFLLVVTLGTMWLCG) form a helical membrane-spanning segment. Residues 505–523 (KLLGLVARWLCGARKLKKA) lie on the Cytoplasmic side of the membrane.

The protein belongs to the UDP-glycosyltransferase family.

It localises to the membrane. It carries out the reaction glucuronate acceptor + UDP-alpha-D-glucuronate = acceptor beta-D-glucuronoside + UDP + H(+). UDP-glucuronosyltransferases catalyze phase II biotransformation reactions in which lipophilic substrates are conjugated with glucuronic acid to increase water solubility and enhance excretion. They are of major importance in the conjugation and subsequent elimination of potentially toxic xenobiotics and endogenous compounds. This Bos taurus (Bovine) protein is UDP-glucuronosyltransferase 3A1 (UGT3A1).